A 199-amino-acid polypeptide reads, in one-letter code: Acireductone dioxygenase 2 (199 aa).

Histidine 98, histidine 100, glutamate 104, and histidine 143 together coordinate Fe(2+). 4 residues coordinate Ni(2+): histidine 98, histidine 100, glutamate 104, and histidine 143.

The protein belongs to the acireductone dioxygenase (ARD) family. It depends on Fe(2+) as a cofactor. Requires Ni(2+) as cofactor.

It is found in the cytoplasm. The protein localises to the nucleus. The enzyme catalyses 1,2-dihydroxy-5-(methylsulfanyl)pent-1-en-3-one + O2 = 4-methylsulfanyl-2-oxobutanoate + formate + 2 H(+). It carries out the reaction 1,2-dihydroxy-5-(methylsulfanyl)pent-1-en-3-one + O2 = 3-(methylsulfanyl)propanoate + CO + formate + 2 H(+). It functions in the pathway amino-acid biosynthesis; L-methionine biosynthesis via salvage pathway; L-methionine from S-methyl-5-thio-alpha-D-ribose 1-phosphate: step 5/6. Its function is as follows. Catalyzes 2 different reactions between oxygen and the acireductone 1,2-dihydroxy-3-keto-5-methylthiopentene (DHK-MTPene) depending upon the metal bound in the active site. Fe-containing acireductone dioxygenase (Fe-ARD) produces formate and 2-keto-4-methylthiobutyrate (KMTB), the alpha-ketoacid precursor of methionine in the methionine recycle pathway. Ni-containing acireductone dioxygenase (Ni-ARD) produces methylthiopropionate, carbon monoxide and formate, and does not lie on the methionine recycle pathway. In Vitis vinifera (Grape), this protein is Acireductone dioxygenase 2.